Reading from the N-terminus, the 155-residue chain is Small ribosomal subunit protein uS7c (155 aa).

The protein belongs to the universal ribosomal protein uS7 family. Part of the 30S ribosomal subunit.

The protein localises to the plastid. Functionally, one of the primary rRNA binding proteins, it binds directly to 16S rRNA where it nucleates assembly of the head domain of the 30S subunit. The sequence is that of Small ribosomal subunit protein uS7c (rps7) from Lathraea clandestina (Purple toothwort).